The sequence spans 385 residues: 3-hydroxyisobutyryl-CoA hydrolase, mitochondrial (385 aa).

A mitochondrion-targeting transit peptide spans 1 to 32 (MGQPYAWRLLSRVSSFRRASVILQHLRMSMHT). Lys54, Lys91, and Lys100 each carry N6-acetyllysine; alternate. N6-succinyllysine; alternate occurs at positions 54, 91, and 100. Substrate is bound by residues Glu120, Gly145, Glu168, and Asp176. Lys220 bears the N6-acetyllysine; alternate mark. Lys220 carries the N6-succinyllysine; alternate modification. Ser233 carries the post-translational modification Phosphoserine. N6-succinyllysine is present on residues Lys249 and Lys256. Lys296 is subject to N6-acetyllysine; alternate. Lys296 is subject to N6-succinyllysine; alternate. Lys300 carries the N6-succinyllysine modification. An N6-acetyllysine; alternate modification is found at Lys352. Lys352 carries the N6-succinyllysine; alternate modification. N6-acetyllysine occurs at positions 359 and 364. Lys376 carries the N6-succinyllysine modification.

The protein belongs to the enoyl-CoA hydratase/isomerase family.

It is found in the mitochondrion. It catalyses the reaction 3-hydroxy-2-methylpropanoyl-CoA + H2O = 3-hydroxy-2-methylpropanoate + CoA + H(+). It functions in the pathway amino-acid degradation; L-valine degradation. Its function is as follows. Hydrolyzes 3-hydroxyisobutyryl-CoA (HIBYL-CoA), a saline catabolite. Has high activity toward isobutyryl-CoA. Could be an isobutyryl-CoA dehydrogenase that functions in valine catabolism. Also hydrolyzes 3-hydroxypropanoyl-CoA. This is 3-hydroxyisobutyryl-CoA hydrolase, mitochondrial (Hibch) from Mus musculus (Mouse).